Here is a 2329-residue protein sequence, read N- to C-terminus: Pre-mRNA-splicing factor 8 homolog (2329 aa).

Positions 1-53 are disordered; sequence MANYGGHPQTEPHAIPDSILEEKSRKWKQLQGKRYSEKKKFGMSDTQKEEMPP. The segment covering 34-53 has biased composition (basic and acidic residues); sequence RYSEKKKFGMSDTQKEEMPP. The interval 804-1295 is reverse transcriptase homology domain; sequence TTVHWLESRR…KIQTRIKIGL (492 aa). Residues 1296 to 1570 are linker; the sequence is NSKMPSRFPP…TLKISLIQIF (275 aa). The interval 1506 to 1519 is important for branch point selection; that stretch reads MKFKKLTNAQRSGL. The segment at 1574–1745 is restriction endonuclease homology domain; the sequence is LWQKIHESVV…LRERIRKGLQ (172 aa). Residues 1760–2013 are RNase H homology domain; sequence NYGELFSNQI…ILGMEISAPS (254 aa). An MPN domain is found at 2096–2227; sequence TYILPKNILK…LTAYKLTPSG (132 aa).

As to quaternary structure, part of the U5 snRNP complex and of the U4/U6-U5 tri-snRNP complex.

The protein localises to the nucleus. Functions as a scaffold that mediates the ordered assembly of spliceosomal proteins and snRNAs. Required for the assembly of the U4/U6-U5 tri-snRNP complex. Functions as a scaffold that positions spliceosomal U2, U5 and U6 snRNAs at splice sites on pre-mRNA substrates, so that splicing can occur. Interacts with both the 5' and the 3' splice site. The sequence is that of Pre-mRNA-splicing factor 8 homolog (prp-8) from Caenorhabditis elegans.